The primary structure comprises 223 residues: MGRGKIEIKRIENTTNRQVTFCKRRNGLLKKAYELSVLCDAEVALIVFSSRGRVYEYSNNNIKSTIDRYKKASSDSTNGGSTMEINAQYYQQESAKLRQQIQMLQNSNRHLMGDSLASLTVKELKQLENRLERGITRIRSKKHELLLAEIEYLQKREIELENESVYLRTKIAEVERLQQANMVSTHEFNAIQALVSRNFFQPNMIEGGSTGYPLPDKKVLHLG.

Residues 1–61 enclose the MADS-box domain; that stretch reads MGRGKIEIKR…GRVYEYSNNN (61 aa). A K-box domain is found at 87 to 177; that stretch reads AQYYQQESAK…RTKIAEVERL (91 aa).

As to expression, expressed in flowers and seeds. Expressed in endotesta cell layer of developing seeds.

It is found in the nucleus. Its function is as follows. Probable transcription factor involved in seed development. Plays a role in seed morphogenesis by promoting the correct development of endotesta cell layer, which directs the further development of the seed coat, the endosperm, and consequently the embryo. In Vitis vinifera (Grape), this protein is Agamous-like MADS-box protein AGL11.